The following is a 628-amino-acid chain: Hemocyanin II (628 aa).

Blocked amino end (Thr); partial is present on Thr1. His173, His177, His204, His324, His328, and His364 together coordinate Cu cation. A glycan (N-linked (GlcNAc...) asparagine) is linked at Asn449. Disulfide bonds link Cys534-Cys576 and Cys536-Cys583.

The protein belongs to the tyrosinase family. Hemocyanin subfamily. As to quaternary structure, hexamer or a multiple thereof. In terms of tissue distribution, hemolymph.

The protein localises to the secreted. It localises to the extracellular space. Its function is as follows. Hemocyanins are copper-containing oxygen carriers occurring freely dissolved in the hemolymph of many mollusks and arthropods. The chain is Hemocyanin II from Limulus polyphemus (Atlantic horseshoe crab).